We begin with the raw amino-acid sequence, 184 residues long: Adenine phosphoribosyltransferase (184 aa).

The protein belongs to the purine/pyrimidine phosphoribosyltransferase family. Homodimer.

It localises to the cytoplasm. It carries out the reaction AMP + diphosphate = 5-phospho-alpha-D-ribose 1-diphosphate + adenine. Its pathway is purine metabolism; AMP biosynthesis via salvage pathway; AMP from adenine: step 1/1. Functionally, catalyzes a salvage reaction resulting in the formation of AMP, that is energically less costly than de novo synthesis. This is Adenine phosphoribosyltransferase from Paracidovorax citrulli (strain AAC00-1) (Acidovorax citrulli).